Consider the following 90-residue polypeptide: Small ribosomal subunit protein bS20 (90 aa).

Positions 1–11 (MANIKSSEKDI) are enriched in basic and acidic residues. Positions 1–29 (MANIKSSEKDIRRTKRRNAANSQNRSRLR) are disordered.

It belongs to the bacterial ribosomal protein bS20 family.

Its function is as follows. Binds directly to 16S ribosomal RNA. The polypeptide is Small ribosomal subunit protein bS20 (Leptospira borgpetersenii serovar Hardjo-bovis (strain JB197)).